Consider the following 197-residue polypeptide: Nucleoside triphosphate pyrophosphatase (197 aa).

Asp-70 (proton acceptor) is an active-site residue.

It belongs to the Maf family. It depends on a divalent metal cation as a cofactor.

Its subcellular location is the cytoplasm. The catalysed reaction is a ribonucleoside 5'-triphosphate + H2O = a ribonucleoside 5'-phosphate + diphosphate + H(+). It catalyses the reaction a 2'-deoxyribonucleoside 5'-triphosphate + H2O = a 2'-deoxyribonucleoside 5'-phosphate + diphosphate + H(+). In terms of biological role, nucleoside triphosphate pyrophosphatase. May have a dual role in cell division arrest and in preventing the incorporation of modified nucleotides into cellular nucleic acids. This chain is Nucleoside triphosphate pyrophosphatase (yhdE), found in Shigella flexneri.